The sequence spans 180 residues: MATVRPFDKMPMLNAAALLLVGTEESHREQLASAMLKEPKTFEVKIHMAQSLPLPYEREHLRPRFDMVVFLINLHSQLSLSTILASLTQLDVNFFLGKVCFVATGGGQVKHCMVDIATVKKLADTHLSTLLFSEFASEDDVTCTAQRLLQMLKICAGLVPGISALYLGSFMSSTLQTDQF.

The protein localises to the nucleus. Its subcellular location is the chromosome. The protein resides in the centromere. Probable component of a centromeric complex involved in assembly of kinetochore proteins, mitotic progression and chromosome segregation. The polypeptide is Centromere protein M (cenpm) (Xenopus laevis (African clawed frog)).